A 740-amino-acid chain; its full sequence is Isocitrate dehydrogenase [NADP] 2 (740 aa).

Asn83 and Ser85 together coordinate NADP(+). D-threo-isocitrate contacts are provided by Ser130, Asn133, Arg137, Arg143, and Lys253. Asn133 contacts NADP(+). A Mg(2+)-binding site is contributed by Asp348. D-threo-isocitrate-binding residues include Tyr418 and Arg546. Residues Asp547 and Asp551 each coordinate Mg(2+). NADP(+)-binding residues include Ser584, His588, Arg599, Asp601, and Arg648.

It belongs to the monomeric-type IDH family. As to quaternary structure, monomer. It depends on Mg(2+) as a cofactor. Requires Mn(2+) as cofactor.

The enzyme catalyses D-threo-isocitrate + NADP(+) = 2-oxoglutarate + CO2 + NADPH. With respect to regulation, IDH activity is not significantly affected by monovalent cations. The combined addition of Mn(2+) and another divalent cation results in the decrease of the activity. Catalyzes the oxidative decarboxylation of isocitrate to 2-oxoglutarate and carbon dioxide with the concomitant reduction of NADP(+). Cannot use NAD(+). This is Isocitrate dehydrogenase [NADP] 2 from Psychrobacter sp. (strain 13A).